The following is a 585-amino-acid chain: Nitrogen permease regulator 3-like protein (585 aa).

Positions 117–157 are disordered; the sequence is GEWAKRRKPRTTVESNASSSHLVSKPESSHPSTGSFEVKSS. Positions 128 to 138 are enriched in polar residues; sequence TVESNASSSHL. The segment covering 148–157 has biased composition (low complexity); that stretch reads STGSFEVKSS.

It belongs to the NPR3 family.

The sequence is that of Nitrogen permease regulator 3-like protein from Schizosaccharomyces pombe (strain 972 / ATCC 24843) (Fission yeast).